Here is a 544-residue protein sequence, read N- to C-terminus: Lariat debranching enzyme (544 aa).

4 residues coordinate a divalent metal cation: cysteine 8, histidine 10, aspartate 39, and asparagine 84. The segment at 124 to 154 (SGIFKSHDYRKGHFECPPYNSSTIRSIYHVR) is lariat recognition loop. The residue at position 128 (lysine 128) is an N6-acetyllysine. A divalent metal cation contacts are provided by histidine 174, histidine 226, and histidine 228. The span at 395–412 (EYEEQDDVESNDSGEDQS) shows a compositional bias: acidic residues. The segment at 395–463 (EYEEQDDVES…PSDQASEFSA (69 aa)) is disordered. Over residues 413–425 (EYNTDTSALSSIN) the composition is skewed to polar residues. Acidic residues predominate over residues 429-439 (IMLDEEEDEDS). The segment covering 445 to 463 (SGMNTPSVEPSDQASEFSA) has biased composition (polar residues). A phosphoserine mark is found at serine 464, serine 474, serine 478, serine 479, serine 485, serine 499, and serine 514. The segment at 476-544 (IVSSDDTVDS…AVDDDDDDAA (69 aa)) is disordered. Over residues 512-522 (RLSDEHEPEQR) the composition is skewed to basic and acidic residues.

It belongs to the lariat debranching enzyme family. Fe(2+) serves as cofactor. It depends on Zn(2+) as a cofactor. Requires Mn(2+) as cofactor. As to expression, ubiquitously expressed, strongest expression in the spinal cord and brainstem.

The protein localises to the nucleus. Its activity is regulated as follows. Active in presence of diverse metals including Fe(2+), Zn(2+), Mn(2+). Also activated by Ca(2+). Binds two metal cations in two adjacent alpha and beta metal-binding pockets. Cleaves the 2'-5' phosphodiester linkage at the branch point of excised lariat intron RNA and converts them into linear molecules that can be subsequently degraded, thereby facilitating ribonucleotide turnover. Linked to its role in pre-mRNA processing mechanism, may also participate in retrovirus replication via an RNA lariat intermediate in cDNA synthesis and have an antiviral cell-intrinsic defense function in the brainstem. The sequence is that of Lariat debranching enzyme (DBR1) from Homo sapiens (Human).